The following is a 373-amino-acid chain: Leucine aminopeptidase 1 (373 aa).

The signal sequence occupies residues Met1–Gly18. Positions 176 and 195 each coordinate Zn(2+). A glycan (N-linked (GlcNAc...) asparagine) is linked at Asn196. Positions 234 and 261 each coordinate Zn(2+). The N-linked (GlcNAc...) asparagine glycan is linked to Asn288. Cys310 and Cys314 are disulfide-bonded. His343 is a binding site for Zn(2+). N-linked (GlcNAc...) asparagine glycosylation is present at Asn348.

Belongs to the peptidase M28 family. M28E subfamily. In terms of assembly, monomer. The cofactor is Zn(2+).

The protein resides in the secreted. With respect to regulation, activity is inhibited by EDTA, o-phenanthroline, bestatin and amastatin. Extracellular aminopeptidase which contributes to pathogenicity. This chain is Leucine aminopeptidase 1 (LAP1), found in Trichophyton rubrum (Athlete's foot fungus).